A 206-amino-acid polypeptide reads, in one-letter code: Ras-related protein RABH1a (206 aa).

GTP is bound at residue 14-21 (GDQGVGKT). Positions 36–44 (YQATIGIDF) match the Effector region motif. Residues 62–66 (DTAGQ), 120–123 (NKTD), and 150–151 (SA) contribute to the GTP site. S-geranylgeranyl cysteine attachment occurs at residues Cys-204 and Cys-206. Position 206 is a cysteine methyl ester (Cys-206).

The protein belongs to the small GTPase superfamily. Rab family.

It is found in the golgi apparatus membrane. Functionally, protein transport. Regulator of membrane traffic from the Golgi apparatus towards the endoplasmic reticulum (ER). The sequence is that of Ras-related protein RABH1a (RABH1A) from Arabidopsis thaliana (Mouse-ear cress).